The primary structure comprises 238 residues: Ribosomal RNA small subunit methyltransferase G (238 aa).

S-adenosyl-L-methionine-binding positions include Gly77, Phe82, 128 to 129 (AE), and Arg147.

It belongs to the methyltransferase superfamily. RNA methyltransferase RsmG family.

The protein resides in the cytoplasm. Its function is as follows. Specifically methylates the N7 position of guanine in position 535 of 16S rRNA. In Listeria monocytogenes serotype 4b (strain F2365), this protein is Ribosomal RNA small subunit methyltransferase G.